Consider the following 2138-residue polypeptide: Protein virilizer homolog (2138 aa).

Disordered stretches follow at residues 1503 to 1574, 1638 to 1664, 1855 to 1881, 2013 to 2035, and 2058 to 2094; these read RLPQ…SMHV, NPTPARDTEKVAGKPKQFKADPDDDLQ, PVIPHSSDSLSNQSSPFISHGTQSSGG, PMQPPQHVRPPIQISQPSEQGVS, and YYHPPQQQEISQVQQQQQHHAVQGQQGAGTSQQQESG. The segment covering 1528–1541 has biased composition (polar residues); that stretch reads ENSSVDIPTQNSIQ. Polar residues-rich tracts occupy residues 1862–1881 and 2025–2035; these read DSLSNQSSPFISHGTQSSGG and QISQPSEQGVS.

This sequence belongs to the vir family. In terms of assembly, interacts with MTB, FIP37 and HAKAI. Associates with MTA, MTB, FIP37 and HAKAI to form the m6A writer complex which is essential for adenosine methylation at specific mRNA sequences.

The protein resides in the nucleus speckle. It is found in the nucleus. Its subcellular location is the nucleoplasm. In terms of biological role, subunit of the N6-methyltransferase complex, a multiprotein complex that mediates N6-methyladenosine (m6A) methylation at the 5'-[AG]GAC-3' consensus sites of some mRNAs. Associates with MTA, MTB, FIP37 and HAKAI to form the m6A writer complex which is essential for adenosine methylation at specific mRNA sequences. N6-methyladenosine (m6A) plays a role in mRNA stability, processing, translation efficiency and editing. This Arabidopsis thaliana (Mouse-ear cress) protein is Protein virilizer homolog.